We begin with the raw amino-acid sequence, 141 residues long: Large-conductance mechanosensitive channel (141 aa).

2 helical membrane passes run 16–36 (VIDLAVGVIIGAAFGKIVDSL) and 86–106 (GNFITVAVNFLILAFIVFLMV).

Belongs to the MscL family. Homopentamer.

The protein localises to the cell inner membrane. Channel that opens in response to stretch forces in the membrane lipid bilayer. May participate in the regulation of osmotic pressure changes within the cell. This chain is Large-conductance mechanosensitive channel, found in Ralstonia nicotianae (strain ATCC BAA-1114 / GMI1000) (Ralstonia solanacearum).